A 411-amino-acid chain; its full sequence is MSGGIMDEEIEIPPFFLCPISLEIMKDPVIVSTGITYDRDSIEKWLFAGKKNSCPVTKQDITDADLTPNHTLRRLIQSWCTLNASYGVERIPTPRPPICKSEIEKLIRDSASSHENQVKCLKRLRQIVSENATNKRCLEAAGVPEFLANIVSNDSENGSLTDEALNLLYHLETSETVLKNLLNNKKDNNIVKSLTKIMQRGMYESRVYATLLLKNILEVADPMQSMTLKPEVFTEVVQILDDRISQKATKAAMHILVNICPWGRNRHKAVEAGVISVIIELLMDESFTSERRGPEMAMVVLDLLCQCAEGRAEFLNHGAAIAVVCKKILRVSQTASDRAVRVLLSVGRFCATPALLHEMLQLGVVAKLCLVLQVSCGGKTKEKAKELLKLHARVWKDSPCLPKNMILAYPC.

One can recognise a U-box domain in the interval Glu-11 to Tyr-86. ARM repeat units lie at residues Ala-132 to Thr-173, Glu-175 to Tyr-203, Asp-221 to Pro-261, and Gly-263 to Gln-306.

Interacts with RPN12A. In terms of processing, auto-ubiquitinated.

The protein resides in the cytoplasm. It carries out the reaction S-ubiquitinyl-[E2 ubiquitin-conjugating enzyme]-L-cysteine + [acceptor protein]-L-lysine = [E2 ubiquitin-conjugating enzyme]-L-cysteine + N(6)-ubiquitinyl-[acceptor protein]-L-lysine.. It functions in the pathway protein modification; protein ubiquitination. Functionally, E3 ubiquitin-protein ligase that negatively regulates water stress response. May control in coordination with PUB23 a drought signaling pathway by ubiquitinating cytosolic RPN12a. Acts as a negative regulator of the immunity triggered by the pathogen-associated molecular patterns (PAMPs), in association with PUB22 and PUB24. The polypeptide is E3 ubiquitin-protein ligase PUB23 (PUB23) (Arabidopsis thaliana (Mouse-ear cress)).